A 95-amino-acid polypeptide reads, in one-letter code: Large ribosomal subunit protein uL23c (95 aa).

It belongs to the universal ribosomal protein uL23 family. In terms of assembly, part of the 50S ribosomal subunit.

It localises to the plastid. The protein localises to the chloroplast. Binds to 23S rRNA. The chain is Large ribosomal subunit protein uL23c (rpl23) from Chlamydomonas reinhardtii (Chlamydomonas smithii).